A 559-amino-acid chain; its full sequence is MRYIELAQLYQKLEKTTMKLIKTRLVADFLKKVPEDHLEFIPYLILGDVFPEWDERELGVGEKLLIKAVSMATGIDSKEIENSVKDTGDLGESIALAVKKRKQKSFFSQPLTIKRVYQTLVKVAETTGEGSQDKKMKYLANLFMDAEPIEAKYIARTVLGTMRTGVAEGLLRDAISLAFNVKVELVERAYMLTSDFGFVAKIAKTEGNDGLAKVTIQIGKPIKPMLAQQAANIKEALLEMGGEAEFEIKYDGARVQVHKDGEKVTIYSRRLENVTRAIPEIVEAIKEALKPTKAIVEGELVAIGEDGRPLPFQYVLRRFRRKYNIEEMMEKIPLELNLFDVLYVDGVSLIDTKFMERRKKLEEIVETNGKVKIAENLITKNVEEAEQFYKRALEMGHEGLMAKRLDAVYEPGNRGKKWLKIKPTMENLDLVIIGAEWGEGRRAHLLGSFILGAYDPETGEFLEVGKVGSGFTDDDLVEFTKMLKPLIIKEEGKRVWIQPKVVIEVTYQEIQKSPKYRSGFALRFPRYVALREDKGPEDADTIERIAQLYELQERMKGKV.

Residue Glu-247 coordinates ATP. The N6-AMP-lysine intermediate role is filled by Lys-249. ATP is bound by residues Arg-254, Arg-269, Glu-299, Phe-339, Arg-414, and Lys-420.

The protein belongs to the ATP-dependent DNA ligase family. It depends on Mg(2+) as a cofactor.

The enzyme catalyses ATP + (deoxyribonucleotide)n-3'-hydroxyl + 5'-phospho-(deoxyribonucleotide)m = (deoxyribonucleotide)n+m + AMP + diphosphate.. Functionally, DNA ligase that seals nicks in double-stranded DNA during DNA replication, DNA recombination and DNA repair. This Pyrococcus abyssi (strain GE5 / Orsay) protein is DNA ligase.